The primary structure comprises 197 residues: Ion-translocating oxidoreductase complex subunit B (197 aa).

The tract at residues 1-26 (MSIVIIAVLALSALALTFGAVLGFAS) is hydrophobic. In terms of domain architecture, 4Fe-4S spans 32 to 90 (EGNPIVDQIDGLLPQTQCGQCGYPGCRPYAEAIANGDAINKCPPGGEATITALADLLDV). Cys49, Cys52, Cys57, Cys73, Cys115, Cys118, Cys121, Cys125, Cys145, Cys148, Cys151, and Cys155 together coordinate [4Fe-4S] cluster. 2 consecutive 4Fe-4S ferredoxin-type domains span residues 106 to 135 (QVAYIREDECIGCTKCIQACPVDAILGAAK) and 136 to 165 (QMHTVIVSECTGCDLCVEPCPVDCIDMIPA).

This sequence belongs to the 4Fe4S bacterial-type ferredoxin family. RnfB subfamily. The complex is composed of six subunits: RnfA, RnfB, RnfC, RnfD, RnfE and RnfG. [4Fe-4S] cluster serves as cofactor.

Its subcellular location is the cell inner membrane. Functionally, part of a membrane-bound complex that couples electron transfer with translocation of ions across the membrane. This Hahella chejuensis (strain KCTC 2396) protein is Ion-translocating oxidoreductase complex subunit B.